A 1412-amino-acid chain; its full sequence is Ecdysone-induced protein 75B, isoform B (1412 aa).

Residues 1 to 14 show a composition bias toward low complexity; sequence MEAVQAAAAATSSG. 4 disordered regions span residues 1–96, 110–204, 258–298, and 321–448; these read MEAV…PGGT, QRAT…QQHV, QYQQ…VPPP, and HFQQ…SIPD. Positions 15–25 are enriched in gly residues; the sequence is GSSGSVPGSGS. The span at 32–57 shows a compositional bias: basic and acidic residues; the sequence is IKTEPIDFEMLHLEENERQQDIEREP. The segment covering 58 to 68 has biased composition (low complexity); the sequence is SSSNSNSNSNS. A compositionally biased stretch (polar residues) spans 69–81; it reads LTPQRYTHVQVQT. The span at 87-96 shows a compositional bias: low complexity; sequence PTGLTTPGGT. Positions 124–133 are enriched in polar residues; it reads YSQQQGTAAS. The span at 135–150 shows a compositional bias: low complexity; that stretch reads SAPPETTALLTTTSGT. Polar residues predominate over residues 151-164; that stretch reads PQIIITRTLPSNQH. Over residues 177–203 the composition is skewed to low complexity; sequence HHYQQQQPQRQQSPPPLHHQQQQQQQH. Over residues 266 to 284 the composition is skewed to pro residues; it reads PLAPPPPPPPPPPPPPPPQ. 3 stretches are compositionally biased toward low complexity: residues 323–371, 378–403, and 417–447; these read QQQQ…SSHI, SSSS…NSVM, and ASSS…SSIP. The segment at residues 455-531 is a DNA-binding region (nuclear receptor); the sequence is TVLCRVCGDK…VGMSRDAVRF (77 aa). NR C4-type zinc fingers lie at residues 458–478 and 495–514; these read CRVC…CEGC and CTKN…CQYC. The region spanning 565-813 is the NR LBD domain; it reads DQPRLLAAVL…QQMWSMEDGN (249 aa). Disordered stretches follow at residues 837-878, 984-1021, 1044-1064, 1108-1174, 1204-1317, and 1368-1401; these read KSPL…SALA, LDSP…SVDD, VSVS…KRQI, AEAD…SSHS, ENST…SNSA, and VTVT…NPGL. Composition is skewed to low complexity over residues 854–866, 1005–1017, 1044–1058, 1110–1155, and 1163–1174; these read GSPS…GVSL, SSGG…SPRS, VSVS…STSS, ADAS…AQSQ, and SSPKASMASSHS. 2 stretches are compositionally biased toward polar residues: residues 1206-1219 and 1231-1253; these read STAA…VGNR and AVQN…QRQQ. 3 stretches are compositionally biased toward low complexity: residues 1254 to 1290, 1299 to 1317, and 1372 to 1400; these read SVSP…SASS, STSN…SNSA, and ASNG…PNPG.

This sequence belongs to the nuclear hormone receptor family. NR1 subfamily.

It localises to the nucleus. Its function is as follows. Implicated in the regulation of ecdysone-triggered gene hierarchies. Probably plays a key role in mediating the regulation of the larval molt by 20-OH-ecdysone. The sequence is that of Ecdysone-induced protein 75B, isoform B (Eip75B) from Drosophila melanogaster (Fruit fly).